The sequence spans 114 residues: Lectin MVL (114 aa).

Residues 2 to 55 form repeat 1; sequence ASYKVNIPAGPLWSNAEAQQVGPKIAAAHQGNFTGQWTTVVESAMSVVEVELQV. A carbohydrate contacts are provided by residues 12 to 16, Gln-20, and 36 to 44; these read PLWSN and GQWTTVVES. A linker region spans residues 56-60; sequence ENTGI. Repeat unit 2 spans residues 61-114; the sequence is HEFKTDVLAGPLWSNDEAQKLGPQIAASYGAEFTGQWRTIVEGVMSVIQIKYTF. Residues 71–75, Gln-79, and 95–103 contribute to the a carbohydrate site; these read PLWSN and GQWRTIVEG.

As to quaternary structure, homodimer.

Its subcellular location is the cytoplasm. Carbohydrate-binding protein that binds oligomannosides such as Man(6)GlcNAc(2) with sub-micromolar affinities. The specificity of MVL is unique in that its minimal target comprises the Man-alpha-(1-&gt;6)-Man-beta-(1-&gt;4)-GlcNAc-beta-(1-&gt;4)-GlcNAc tetrasaccharide core (Man(2)A) found in N-linked oligomannosides. Displays hemagglutininating activity on rabbit, horse and hen erythrocytes. This activity is inhibited by yeast mannan. Does not bind mono- and disaccharides. Inhibits HIV-1 envelope-mediated cell fusion at nanomolar concentrations through carbohydrate-mediated interactions with high-mannose residues on the surface of the HIV envelope glycoprotein gp120. Functionally, unexpectedly for a lectin, one of the 2 oligomannose binding sites of MVL can catalyze the cleavage of chitin fragments (such as chitotriose, i.e. GlcNAc(3) or GlcNAc-beta-(1-&gt;4)-GlcNAcbeta-(1-&gt;4)-GlcNAc, and chitotetraose, i.e. GlcNAc(4)) to GlcNAc. This weak beta-1,4-glycosidase activity is restricted to the C-terminal carbohydrate-binding site. Does not cleave Man(3)GlcNAc(2) or the tetrasaccharide Man(2)A. This Microcystis viridis (Polycystis viridis) protein is Lectin MVL (mvl).